A 139-amino-acid chain; its full sequence is Nucleoside diphosphate kinase (139 aa).

ATP contacts are provided by Lys-10, Phe-58, Arg-86, Thr-92, Arg-103, and Asn-113. His-116 (pros-phosphohistidine intermediate) is an active-site residue.

Belongs to the NDK family. Homotetramer. Mg(2+) serves as cofactor.

Its subcellular location is the cytoplasm. The catalysed reaction is a 2'-deoxyribonucleoside 5'-diphosphate + ATP = a 2'-deoxyribonucleoside 5'-triphosphate + ADP. It carries out the reaction a ribonucleoside 5'-diphosphate + ATP = a ribonucleoside 5'-triphosphate + ADP. Functionally, major role in the synthesis of nucleoside triphosphates other than ATP. The ATP gamma phosphate is transferred to the NDP beta phosphate via a ping-pong mechanism, using a phosphorylated active-site intermediate. The protein is Nucleoside diphosphate kinase of Nitratidesulfovibrio vulgaris (strain ATCC 29579 / DSM 644 / CCUG 34227 / NCIMB 8303 / VKM B-1760 / Hildenborough) (Desulfovibrio vulgaris).